We begin with the raw amino-acid sequence, 121 residues long: Basic phospholipase A2 homolog piratoxin-2 (121 aa).

7 disulfide bridges follow: Cys26/Cys115, Cys28/Cys44, Cys43/Cys95, Cys49/Cys121, Cys50/Cys88, Cys57/Cys81, and Cys75/Cys86. Residues 105-117 (KKYRYHLKPFCKK) are important for membrane-damaging activities in eukaryotes and bacteria; heparin-binding.

The protein belongs to the phospholipase A2 family. Group II subfamily. K49 sub-subfamily. As to quaternary structure, homodimer; non-covalently linked. Expressed by the venom gland.

It localises to the secreted. Its function is as follows. Snake venom phospholipase A2 (PLA2) homolog that lacks enzymatic activity. Shows myotoxic activity and edema-inducing activities in vivo. A model of myotoxic mechanism has been proposed: an apo Lys49-PLA2 is activated by the entrance of a hydrophobic molecule (e.g. fatty acid) at the hydrophobic channel of the protein leading to a reorientation of a monomer. This reorientation causes a transition between 'inactive' to 'active' states, causing alignment of C-terminal and membrane-docking sites (MDoS) side-by-side and putting the membrane-disruption sites (MDiS) in the same plane, exposed to solvent and in a symmetric position for both monomers. The MDoS region stabilizes the toxin on membrane by the interaction of charged residues with phospholipid head groups. Subsequently, the MDiS region destabilizes the membrane with penetration of hydrophobic residues. This insertion causes a disorganization of the membrane, allowing an uncontrolled influx of ions (i.e. calcium and sodium), and eventually triggering irreversible intracellular alterations and cell death. This is Basic phospholipase A2 homolog piratoxin-2 from Bothrops pirajai (Piraja's lancehead).